Here is a 299-residue protein sequence, read N- to C-terminus: Protein translocase subunit SecF (299 aa).

6 consecutive transmembrane segments (helical) span residues 14-34 (VLIV…FYHG), 142-162 (IFLV…RFKL), 166-186 (IASI…LGVF), 193-213 (YIIV…IIIF), 245-265 (LTSV…EGSI), and 270-290 (LVFM…ASPI).

The protein belongs to the SecD/SecF family. SecF subfamily. In terms of assembly, forms a complex with SecD. Part of the essential Sec protein translocation apparatus which comprises SecA, SecYEG and auxiliary proteins SecDF. Other proteins may also be involved.

The protein localises to the cell inner membrane. Part of the Sec protein translocase complex. Interacts with the SecYEG preprotein conducting channel. SecDF uses the proton motive force (PMF) to complete protein translocation after the ATP-dependent function of SecA. The chain is Protein translocase subunit SecF from Borreliella burgdorferi (strain ATCC 35210 / DSM 4680 / CIP 102532 / B31) (Borrelia burgdorferi).